Here is a 117-residue protein sequence, read N- to C-terminus: Replication initiation control protein YabA (117 aa).

H87, C89, C103, and C106 together coordinate Zn(2+).

It belongs to the YabA family. In terms of assembly, homotetramer. Interacts with both DnaA and DnaN, acting as a bridge between these two proteins. Requires Zn(2+) as cofactor.

The protein resides in the cytoplasm. Its subcellular location is the nucleoid. Functionally, involved in control of chromosome replication initiation. Inhibits the cooperative binding of DnaA to the oriC region, thus negatively regulating initiation of chromosome replication. Inhibits the ability of DnaA-ATP to form a helix on DNA; does not disassemble preformed DnaA-DNA helices. Decreases the residence time of DnaA on the chromosome at its binding sites (oriC, replication forks and promoter-binding sites). Tethers DnaA to the replication machinery via the DNA polymerase beta sliding clamp subunit (dnaN). Associates with oriC and other DnaA targets on the chromosome in a DnaA-dependent manner. In Latilactobacillus sakei subsp. sakei (strain 23K) (Lactobacillus sakei subsp. sakei), this protein is Replication initiation control protein YabA.